We begin with the raw amino-acid sequence, 306 residues long: Ornithine carbamoyltransferase (306 aa).

Residues 51 to 54 (STRT), glutamine 78, arginine 102, and 129 to 132 (HPCQ) contribute to the carbamoyl phosphate site. Residues asparagine 160, aspartate 223, and 227–228 (SM) contribute to the L-ornithine site. Residues 263-264 (CL) and arginine 291 contribute to the carbamoyl phosphate site.

This sequence belongs to the aspartate/ornithine carbamoyltransferase superfamily. OTCase family.

It localises to the cytoplasm. It catalyses the reaction carbamoyl phosphate + L-ornithine = L-citrulline + phosphate + H(+). Its pathway is amino-acid biosynthesis; L-arginine biosynthesis; L-arginine from L-ornithine and carbamoyl phosphate: step 1/3. Its function is as follows. Reversibly catalyzes the transfer of the carbamoyl group from carbamoyl phosphate (CP) to the N(epsilon) atom of ornithine (ORN) to produce L-citrulline. The polypeptide is Ornithine carbamoyltransferase (argF) (Nostoc punctiforme (strain ATCC 29133 / PCC 73102)).